Here is a 59-residue protein sequence, read N- to C-terminus: Gonadotropin-releasing hormone receptor (59 aa).

The Cytoplasmic portion of the chain corresponds to 1–2 (VA). The chain crosses the membrane as a helical span at residues 3-23 (FATSFTVCWTPYYVLGIWYWF). The Extracellular portion of the chain corresponds to 24–37 (DPEMLNRVSDPVNH). The helical transmembrane segment at 38–58 (FFFLFAFLNPCFDPLIYGYFS) threads the bilayer. L59 is a topological domain (cytoplasmic).

This sequence belongs to the G-protein coupled receptor 1 family.

The protein resides in the cell membrane. Receptor for gonadotropin releasing hormone (GnRH) that mediates the action of GnRH to stimulate the secretion of the gonadotropic hormones luteinizing hormone (LH) and follicle-stimulating hormone (FSH). This receptor mediates its action by association with G-proteins that activate a phosphatidylinositol-calcium second messenger system. This Macaca mulatta (Rhesus macaque) protein is Gonadotropin-releasing hormone receptor (GNRHR).